The following is a 495-amino-acid chain: MDKQYVVALDQGTTSSRAIVFDRDANLVAVSQREFTQIYPKGGWVEHDPMEIWASQSSTLIEVLARAGIHSDEVAAIGITNQRETTIIWDKLTGKPVCNAIVWQCRRSAAICEALKAQGLEPLFRDKTGLLLDPYFSGTKIKWILDNVPGVRERADAGELLFGTVDTWLVWKLTEGKVHVTDPTNASRTLMYNIHSGEWDSELLKALDIPASLLPEVKSSQAVYGTTRIAGEGTEIPVAGMAGDQQAALFGQLCVEPGMAKNTYGTGCFLLMNTGKQAVKSEHGLLTTIAVGDDGGISYALEGAVFMGGATIQWLRDELGLIRDASDTEYFASKVDDTNGVYLVPAFVGLGAPYWDPDARGTLVGLTRGANRNHIIRAALESIAYQSRDLLDAMSKDSGVALKQLKVDGGAVANDFLMQFQADISGVEVLRPAQTETTAMGAAFLGGLAVGFWSNVDEIRHKSGIDRRFVPLMDDKERATLYLGWQDAVRRSLSS.

Threonine 13 provides a ligand contact to ADP. ATP contacts are provided by threonine 13, threonine 14, and serine 15. Residue threonine 13 coordinates sn-glycerol 3-phosphate. Arginine 17 contacts ADP. Residues arginine 83, glutamate 84, tyrosine 135, and aspartate 244 each coordinate sn-glycerol 3-phosphate. Glycerol contacts are provided by arginine 83, glutamate 84, tyrosine 135, aspartate 244, and glutamine 245. Residues threonine 266 and glycine 309 each coordinate ADP. Residues threonine 266, glycine 309, glutamine 313, and glycine 410 each contribute to the ATP site. Residues glycine 410 and asparagine 414 each coordinate ADP.

Belongs to the FGGY kinase family.

It catalyses the reaction glycerol + ATP = sn-glycerol 3-phosphate + ADP + H(+). It participates in polyol metabolism; glycerol degradation via glycerol kinase pathway; sn-glycerol 3-phosphate from glycerol: step 1/1. Inhibited by fructose 1,6-bisphosphate (FBP). In terms of biological role, key enzyme in the regulation of glycerol uptake and metabolism. Catalyzes the phosphorylation of glycerol to yield sn-glycerol 3-phosphate. The polypeptide is Glycerol kinase (Shewanella amazonensis (strain ATCC BAA-1098 / SB2B)).